The following is a 274-amino-acid chain: NADPH-dependent 7-cyano-7-deazaguanine reductase (274 aa).

Position 80-82 (80-82 (VES)) interacts with substrate. Residue 82–83 (SK) participates in NADPH binding. Cys-181 acts as the Thioimide intermediate in catalysis. The Proton donor role is filled by Asp-188. Substrate is bound at residue 220–221 (HE). 249–250 (RG) is an NADPH binding site.

Belongs to the GTP cyclohydrolase I family. QueF type 2 subfamily. In terms of assembly, homodimer.

The protein resides in the cytoplasm. The enzyme catalyses 7-aminomethyl-7-carbaguanine + 2 NADP(+) = 7-cyano-7-deazaguanine + 2 NADPH + 3 H(+). Its pathway is tRNA modification; tRNA-queuosine biosynthesis. Catalyzes the NADPH-dependent reduction of 7-cyano-7-deazaguanine (preQ0) to 7-aminomethyl-7-deazaguanine (preQ1). This is NADPH-dependent 7-cyano-7-deazaguanine reductase from Paraburkholderia phytofirmans (strain DSM 17436 / LMG 22146 / PsJN) (Burkholderia phytofirmans).